The following is a 201-amino-acid chain: Dermatopontin (201 aa).

Residues 1–18 (MDLTLLWVLLPLVTTAWG) form the signal peptide. At glutamine 19 the chain carries Pyrrolidone carboxylic acid. The segment at 19–186 (QYGGYGYPYQ…AVERDRQWKF (168 aa)) is 2 X 53-55 AA tandem repeats. At tyrosine 23 the chain carries Sulfotyrosine. 4 consecutive repeat copies span residues 26–79 (PYQQ…ACMP), 70–75 (DRQWNY), 80–135 (TPQS…CCRY), and 125–130 (DREWQF). Intrachain disulfides connect cysteine 50-cysteine 77, cysteine 90-cysteine 132, cysteine 106-cysteine 133, cysteine 139-cysteine 196, and cysteine 143-cysteine 189. The 3 X 6 AA tandem repeats of D-R-[EQ]-W-[NQK]-[FY] stretch occupies residues 70–186 (DRQWNYACMP…AVERDRQWKF (117 aa)). Tyrosine 162, tyrosine 164, and tyrosine 167 each carry sulfotyrosine. The stretch at 181-186 (DRQWKF) is one 2-3 repeat. Tyrosine 194 carries the sulfotyrosine modification.

Belongs to the dermatopontin family. Interacts with TGFB1, DCN and collagen. Sulfated on tyrosine residue(s).

The protein resides in the secreted. The protein localises to the extracellular space. It is found in the extracellular matrix. Its function is as follows. Seems to mediate adhesion by cell surface integrin binding. May serve as a communication link between the dermal fibroblast cell surface and its extracellular matrix environment. Enhances TGFB1 activity. Inhibits cell proliferation. Accelerates collagen fibril formation, and stabilizes collagen fibrils against low-temperature dissociation. The chain is Dermatopontin (Dpt) from Mus musculus (Mouse).